Here is a 235-residue protein sequence, read N- to C-terminus: Orotidine 5'-phosphate decarboxylase (235 aa).

Substrate-binding positions include Asp12, Lys34, 61–70 (DMKLLDIDNT), Thr116, Arg177, Gln186, and Arg207. Catalysis depends on Lys63, which acts as the Proton donor.

Belongs to the OMP decarboxylase family. Type 1 subfamily. Homodimer.

It catalyses the reaction orotidine 5'-phosphate + H(+) = UMP + CO2. It functions in the pathway pyrimidine metabolism; UMP biosynthesis via de novo pathway; UMP from orotate: step 2/2. Its function is as follows. Catalyzes the decarboxylation of orotidine 5'-monophosphate (OMP) to uridine 5'-monophosphate (UMP). In Rhizobium etli (strain CIAT 652), this protein is Orotidine 5'-phosphate decarboxylase.